The sequence spans 274 residues: Proteasome subunit beta (274 aa).

Residues 1–52 (MADPMGGAGRLPAVFMTPGTSSFTDFLSQSAPHLLPGARGGLPGPVTEVAHG) constitute a propeptide, removed in mature form; by autocatalysis. Catalysis depends on T53, which acts as the Nucleophile.

It belongs to the peptidase T1B family. The 20S proteasome core is composed of 14 alpha and 14 beta subunits that assemble into four stacked heptameric rings, resulting in a barrel-shaped structure. The two inner rings, each composed of seven catalytic beta subunits, are sandwiched by two outer rings, each composed of seven alpha subunits. The catalytic chamber with the active sites is on the inside of the barrel. Has a gated structure, the ends of the cylinder being occluded by the N-termini of the alpha-subunits. Is capped by the proteasome-associated ATPase, ARC.

It is found in the cytoplasm. The catalysed reaction is Cleavage of peptide bonds with very broad specificity.. It functions in the pathway protein degradation; proteasomal Pup-dependent pathway. The formation of the proteasomal ATPase ARC-20S proteasome complex, likely via the docking of the C-termini of ARC into the intersubunit pockets in the alpha-rings, may trigger opening of the gate for substrate entry. Interconversion between the open-gate and close-gate conformations leads to a dynamic regulation of the 20S proteasome proteolysis activity. In terms of biological role, component of the proteasome core, a large protease complex with broad specificity involved in protein degradation. This is Proteasome subunit beta from Frankia alni (strain DSM 45986 / CECT 9034 / ACN14a).